The following is a 274-amino-acid chain: Ribosomal RNA small subunit methyltransferase A (274 aa).

S-adenosyl-L-methionine contacts are provided by asparagine 28, leucine 30, glycine 55, glutamate 77, aspartate 103, and asparagine 122.

This sequence belongs to the class I-like SAM-binding methyltransferase superfamily. rRNA adenine N(6)-methyltransferase family. RsmA subfamily.

It localises to the cytoplasm. It catalyses the reaction adenosine(1518)/adenosine(1519) in 16S rRNA + 4 S-adenosyl-L-methionine = N(6)-dimethyladenosine(1518)/N(6)-dimethyladenosine(1519) in 16S rRNA + 4 S-adenosyl-L-homocysteine + 4 H(+). In terms of biological role, specifically dimethylates two adjacent adenosines (A1518 and A1519) in the loop of a conserved hairpin near the 3'-end of 16S rRNA in the 30S particle. May play a critical role in biogenesis of 30S subunits. The chain is Ribosomal RNA small subunit methyltransferase A from Sinorhizobium medicae (strain WSM419) (Ensifer medicae).